Here is a 207-residue protein sequence, read N- to C-terminus: Interferon kappa (207 aa).

The N-terminal stretch at 1 to 27 (MSTKPDMIQKCLWLEILMGIFIAGTLS) is a signal peptide. Cystine bridges form between cysteine 30–cysteine 128 and cysteine 59–cysteine 181. Residues 118-148 (LDQQAEYLNQCLEEDKNENEDMKEMKENEMK) are a coiled coil.

The protein belongs to the alpha/beta interferon family. Expressed in keratinocytes, monocytes and in resting dendritic cells.

It is found in the secreted. Functionally, may play a role in the regulation of immune cell function. Cytokine that imparts cellular protection against viral infection in a species-specific manner. Activates the interferon-stimulated response element signaling pathway. It is able to directly modulate cytokine release from monocytes and dendritic cells. Binds heparin. The polypeptide is Interferon kappa (IFNK) (Homo sapiens (Human)).